A 398-amino-acid chain; its full sequence is MSERVILAYSGGLDTSVAISWIGKETGREVVAVAIDLGQGGEDMEVIRQRALDCGAVEAVVVDARDEFAEGYCLPTIRNNALYMDRYPLVSAISRPLIVKHLVAAAREHGGSIVAHGCTGKGNDQVRFEVGFASLAPDLEVLAPVRDYAWTREKAIAFAEENAIPINVTKRSPFSIDQNVWGRAVETGFLEHLWNAPTKDVYAYTEDPTLNWSTPDEVIVGFERGVPVSIDGKPVSVLGAIEELNARAGAQGVGRLDVVEDRLVGIKSREIYEAPGAMVLITAHTELEHVTLERELGRFKRHTDQRWAELVYDGLWYSPLKAALESFVDKTQEHVTGEIRMVLHGGHIAVNGRRSAESLYDFNLATYDEGDSFDQSAAKGFVYVHGLSSKIASRRDQR.

Position 8–16 (8–16 (AYSGGLDTS)) interacts with ATP. L-citrulline is bound at residue tyrosine 87. Glycine 117 provides a ligand contact to ATP. 3 residues coordinate L-aspartate: threonine 119, asparagine 123, and aspartate 124. Asparagine 123 provides a ligand contact to L-citrulline. 4 residues coordinate L-citrulline: arginine 127, serine 175, glutamate 260, and tyrosine 272.

It belongs to the argininosuccinate synthase family. Type 1 subfamily. As to quaternary structure, homotetramer.

The protein resides in the cytoplasm. It carries out the reaction L-citrulline + L-aspartate + ATP = 2-(N(omega)-L-arginino)succinate + AMP + diphosphate + H(+). It functions in the pathway amino-acid biosynthesis; L-arginine biosynthesis; L-arginine from L-ornithine and carbamoyl phosphate: step 2/3. The chain is Argininosuccinate synthase from Mycobacterium avium (strain 104).